The sequence spans 142 residues: Large ribosomal subunit protein uL13 (142 aa).

It belongs to the universal ribosomal protein uL13 family. Part of the 50S ribosomal subunit.

Its function is as follows. This protein is one of the early assembly proteins of the 50S ribosomal subunit, although it is not seen to bind rRNA by itself. It is important during the early stages of 50S assembly. The chain is Large ribosomal subunit protein uL13 from Pseudomonas fluorescens (strain ATCC BAA-477 / NRRL B-23932 / Pf-5).